Here is a 56-residue protein sequence, read N- to C-terminus: Large ribosomal subunit protein bL32 (56 aa).

The interval 1-23 (MAVQQNKSTRSKRGMRRSHNALP) is disordered. The span at 9–19 (TRSKRGMRRSH) shows a compositional bias: basic residues.

The protein belongs to the bacterial ribosomal protein bL32 family.

The chain is Large ribosomal subunit protein bL32 from Blochmanniella floridana.